The primary structure comprises 283 residues: Diaminopimelate epimerase (283 aa).

2 residues coordinate substrate: Asn-13 and Asn-67. Cys-76 serves as the catalytic Proton donor. Residues 77–78, Asn-166, Asn-199, and 217–218 contribute to the substrate site; these read GN and ER. Catalysis depends on Cys-226, which acts as the Proton acceptor. 227–228 is a binding site for substrate; that stretch reads GT.

This sequence belongs to the diaminopimelate epimerase family. Homodimer.

The protein localises to the cytoplasm. The enzyme catalyses (2S,6S)-2,6-diaminopimelate = meso-2,6-diaminopimelate. It functions in the pathway amino-acid biosynthesis; L-lysine biosynthesis via DAP pathway; DL-2,6-diaminopimelate from LL-2,6-diaminopimelate: step 1/1. Functionally, catalyzes the stereoinversion of LL-2,6-diaminopimelate (L,L-DAP) to meso-diaminopimelate (meso-DAP), a precursor of L-lysine and an essential component of the bacterial peptidoglycan. The protein is Diaminopimelate epimerase of Desulforapulum autotrophicum (strain ATCC 43914 / DSM 3382 / VKM B-1955 / HRM2) (Desulfobacterium autotrophicum).